The sequence spans 537 residues: Myosin-binding protein H (537 aa).

The span at 1 to 25 (MTGKTAPAAAKKAPAAKKAPAPASK) shows a compositional bias: low complexity. A disordered region spans residues 1-138 (MTGKTAPAAA…KPKEEPPSVP (138 aa)). Over residues 26 to 69 (KAPEPAPKEKPAPTPKEGHAPTPKEEHAPPPKEEHAPPPKEEHA) the composition is skewed to basic and acidic residues. Low complexity predominate over residues 87 to 104 (EQPAAPAAEHAPTPTHEA). Over residues 112-124 (PPPAAPAEAPAPE) the composition is skewed to pro residues. The 96-residue stretch at 137-232 (VPLSLAVEEV…LEQPVLIREI (96 aa)) folds into the Fibronectin type-III 1 domain. One can recognise an Ig-like C2-type 1 domain in the interval 236 to 324 (PRIRLPRQLR…NGAEDKAILD (89 aa)). A Fibronectin type-III 2 domain is found at 333 to 428 (PPQNLKLVDV…AAGVAHIKKT (96 aa)). The region spanning 444–528 (PKFTQPLTDR…VNPLGEASVD (85 aa)) is the Ig-like C2-type 2 domain.

This sequence belongs to the immunoglobulin superfamily. MyBP family. As to expression, skeletal muscle. Seems to be also expressed in the slow tonic ald muscle. Not detected in gizzard or heart.

Binds to myosin; probably involved in interaction with thick myofilaments in the A-band. The sequence is that of Myosin-binding protein H (MYBPH) from Gallus gallus (Chicken).